Here is a 513-residue protein sequence, read N- to C-terminus: Cytochrome P450 monooxygenase ARMGADRAFT_1018418 (513 aa).

A helical transmembrane segment spans residues 1–21 (MTHASSAWFLAAVVIVTFIVV). Residue Cys-435 coordinates heme. Asn-442 carries an N-linked (GlcNAc...) asparagine glycan.

This sequence belongs to the cytochrome P450 family. Heme is required as a cofactor.

Its subcellular location is the membrane. Its pathway is secondary metabolite biosynthesis. Functionally, cytochrome P450 monooxygenase, part of the gene cluster that mediates the biosynthesis of melleolides, a range of antifungal and phytotoxic polyketide derivatives composed of an orsellinic acid (OA) moiety esterified to various sesquiterpene alcohols. The first step in melleolides biosynthesis is performed by the delta(6)-protoilludene synthase PRO1 which catalyzes the cyclization of farnesyl diphosphate to protoilludene. The orsellinic acid synthase armB produces OA by condensing acetyl-CoA with 3 malonyl-CoA units in a three-round chain elongation reaction folowed by a C2-C7 ring closure. ArmB further catalyzes the trans-esterification of OA to the various sesquiterpene alcohols resulting from the hydroxylation of protoilludene. The melleolides cluster also includes 5 cytochrome P450 monooxygenases, 4 NAD(+)-dependent oxidoreductases, one flavin-dependent oxidoreductase, and one O-methyltransferase. The cytochrome P450 monooxygenases may be involved in protoilludene hydroxylation to elaborate melleolides with multiple alcohol groups, such as melleolide D, which carries alcohol functionalities at C-4, C-5, C-10, and C-13. The role of the NAD(+)-dependent enzymes remains unknown. Numerous melleolides, including arnamial, show 5'-O-methylation of the aromatic moiety which may be catalyzed by the methyltransferase encoded in the cluster. The flavin-dependent oxidoreductase might represent the dehydrogenase yielding the aldehyde in position 1 of arnamial and other melleolides. Finally, several halogenase localized outside of the cluster, are able to catalyze the transfer of a single chlorine atom to the melleolide backbone, resulting in a 6'-chloromelleolide product. The protein is Cytochrome P450 monooxygenase ARMGADRAFT_1018418 of Armillaria gallica (Bulbous honey fungus).